A 597-amino-acid chain; its full sequence is Elongation factor 4 (597 aa).

Residues 2–184 (DHIRNFSIIA…SLIAKVPPPK (183 aa)) enclose the tr-type G domain. GTP-binding positions include 14 to 19 (DHGKST) and 131 to 134 (NKID).

The protein belongs to the TRAFAC class translation factor GTPase superfamily. Classic translation factor GTPase family. LepA subfamily.

The protein localises to the cell inner membrane. It catalyses the reaction GTP + H2O = GDP + phosphate + H(+). Required for accurate and efficient protein synthesis under certain stress conditions. May act as a fidelity factor of the translation reaction, by catalyzing a one-codon backward translocation of tRNAs on improperly translocated ribosomes. Back-translocation proceeds from a post-translocation (POST) complex to a pre-translocation (PRE) complex, thus giving elongation factor G a second chance to translocate the tRNAs correctly. Binds to ribosomes in a GTP-dependent manner. In Burkholderia ambifaria (strain MC40-6), this protein is Elongation factor 4.